The sequence spans 114 residues: uncharacterized protein (114 aa).

The signal sequence occupies residues 1 to 19 (MKASYLVLIFISIFSMAQA). Position 41 is a phosphoserine (serine 41).

Belongs to the protease inhibitor I9 family.

This is an uncharacterized protein from Saccharomyces cerevisiae (strain ATCC 204508 / S288c) (Baker's yeast).